The primary structure comprises 268 residues: Tryptophan synthase alpha chain (268 aa).

Catalysis depends on proton acceptor residues E49 and D60.

This sequence belongs to the TrpA family. Tetramer of two alpha and two beta chains.

The enzyme catalyses (1S,2R)-1-C-(indol-3-yl)glycerol 3-phosphate + L-serine = D-glyceraldehyde 3-phosphate + L-tryptophan + H2O. It participates in amino-acid biosynthesis; L-tryptophan biosynthesis; L-tryptophan from chorismate: step 5/5. Its function is as follows. The alpha subunit is responsible for the aldol cleavage of indoleglycerol phosphate to indole and glyceraldehyde 3-phosphate. The sequence is that of Tryptophan synthase alpha chain from Erwinia tasmaniensis (strain DSM 17950 / CFBP 7177 / CIP 109463 / NCPPB 4357 / Et1/99).